The primary structure comprises 90 residues: Small ribosomal subunit protein uS17 (90 aa).

It belongs to the universal ribosomal protein uS17 family. As to quaternary structure, part of the 30S ribosomal subunit.

Functionally, one of the primary rRNA binding proteins, it binds specifically to the 5'-end of 16S ribosomal RNA. The chain is Small ribosomal subunit protein uS17 from Burkholderia ambifaria (strain ATCC BAA-244 / DSM 16087 / CCUG 44356 / LMG 19182 / AMMD) (Burkholderia cepacia (strain AMMD)).